Consider the following 233-residue polypeptide: MADS-box transcription factor 56 (233 aa).

The region spanning 1-61 is the MADS-box domain; the sequence is MVRGRTELKR…GRLYEFASAP (61 aa). A K-box domain is found at 87-177; that stretch reads IQQVKDDTLG…RGKHRNLEAA (91 aa).

The protein resides in the nucleus. Probable transcription factor. In Oryza sativa subsp. indica (Rice), this protein is MADS-box transcription factor 56 (MADS56).